The primary structure comprises 450 residues: GTPase HflX (450 aa).

2 disordered regions span residues 79-110 and 173-196; these read TSMA…PDAA and RLRE…TLAL. Residues 178–189 show a composition bias toward gly residues; it reads SGGGGRQQGPGA. The region spanning 230 to 395 is the Hflx-type G domain; that stretch reads LRVALVGYTN…TLIAFFEAEM (166 aa). Residues 236–243, 261–265, 283–286, 349–352, and 373–375 contribute to the GTP site; these read GYTNAGKS, FATLD, DTVG, NKMD, and SAH. The Mg(2+) site is built by S243 and T263.

The protein belongs to the TRAFAC class OBG-HflX-like GTPase superfamily. HflX GTPase family. Monomer. Associates with the 50S ribosomal subunit. It depends on Mg(2+) as a cofactor.

The protein localises to the cytoplasm. In terms of biological role, GTPase that associates with the 50S ribosomal subunit and may have a role during protein synthesis or ribosome biogenesis. The sequence is that of GTPase HflX from Gluconacetobacter diazotrophicus (strain ATCC 49037 / DSM 5601 / CCUG 37298 / CIP 103539 / LMG 7603 / PAl5).